The following is a 205-amino-acid chain: uncharacterized protein (205 aa).

Positions alanine 72–arginine 114 are disordered. Over residues arginine 90–leucine 100 the composition is skewed to polar residues. Residues threonine 101–aspartate 110 show a composition bias toward low complexity.

This is an uncharacterized protein from Equus caballus (Horse).